Reading from the N-terminus, the 254-residue chain is Pyruvate dehydrogenase complex repressor (254 aa).

Positions 9–77 (PKLSDVIEQQ…QGGGTFVQSS (69 aa)) constitute an HTH gntR-type domain. The H-T-H motif DNA-binding region spans 37-56 (ERELAKQFDVSRPSLREAIQ).

Transcriptional repressor for the pyruvate dehydrogenase complex genes aceEF and lpd. This is Pyruvate dehydrogenase complex repressor (pdhR) from Salmonella typhi.